The chain runs to 517 residues: GMP synthase [glutamine-hydrolyzing] (517 aa).

The Glutamine amidotransferase type-1 domain occupies Lys-9–Asp-202. The Nucleophile role is filled by Cys-86. Residues His-176 and Glu-178 contribute to the active site. The GMPS ATP-PPase domain occupies Trp-203–Arg-392. Ser-230–Ser-236 lines the ATP pocket.

In terms of assembly, homodimer.

The catalysed reaction is XMP + L-glutamine + ATP + H2O = GMP + L-glutamate + AMP + diphosphate + 2 H(+). Its pathway is purine metabolism; GMP biosynthesis; GMP from XMP (L-Gln route): step 1/1. Its function is as follows. Catalyzes the synthesis of GMP from XMP. The sequence is that of GMP synthase [glutamine-hydrolyzing] from Streptococcus mutans serotype c (strain ATCC 700610 / UA159).